The following is a 108-amino-acid chain: ATP synthase epsilon chain (108 aa).

Belongs to the ATPase epsilon chain family. In terms of assembly, F-type ATPases have 2 components, CF(1) - the catalytic core - and CF(0) - the membrane proton channel. CF(1) has five subunits: alpha(3), beta(3), gamma(1), delta(1), epsilon(1). CF(0) has three main subunits: a, b and c.

The protein resides in the cell inner membrane. In terms of biological role, produces ATP from ADP in the presence of a proton gradient across the membrane. In Thermotoga maritima (strain ATCC 43589 / DSM 3109 / JCM 10099 / NBRC 100826 / MSB8), this protein is ATP synthase epsilon chain.